We begin with the raw amino-acid sequence, 881 residues long: Serine/threonine-protein phosphatase BSL1 (881 aa).

Kelch repeat units follow at residues 60-109 (GSSS…AVGT), 269-320 (RLHV…DQDP), and 338-385 (RIYV…PRFS). Disordered stretches follow at residues 368-407 (SPLL…LSLD) and 436-464 (AGTL…ANEG). Polar residues-rich tracts occupy residues 374 to 383 (DRTQQSSTPR) and 445 to 460 (TSDA…TDGT). S491 bears the Phosphoserine mark. Positions 503-522 (VPMNNSDVPQPTKKFTRQKS) are disordered. The Mn(2+) site is built by D584, H586, D618, and N650. Residue H651 is the Proton donor of the active site. 2 residues coordinate Mn(2+): H703 and H782. The disordered stretch occupies residues 837 to 881 (ILSPENSPEHSGDDAWMQELNIQRPPTPTRGRPQPDFDRSSLAYI). S839 bears the Phosphoserine mark.

It belongs to the PPP phosphatase family. BSU subfamily. Interacts with CDG1 and CDL1. Requires Mn(2+) as cofactor. As to expression, expressed in mature cauline leaves and at the tip of influorescence, including flowers. Expressed at lower level in young tissues relative to older ones.

It is found in the nucleus. It catalyses the reaction O-phospho-L-seryl-[protein] + H2O = L-seryl-[protein] + phosphate. It carries out the reaction O-phospho-L-threonyl-[protein] + H2O = L-threonyl-[protein] + phosphate. Its function is as follows. Phosphatase involved in elongation process, probably by acting as a regulator of brassinolide signaling. This is Serine/threonine-protein phosphatase BSL1 (BSL1) from Arabidopsis thaliana (Mouse-ear cress).